Consider the following 381-residue polypeptide: Queuine tRNA-ribosyltransferase (381 aa).

Residue D89 is the Proton acceptor of the active site. Residues 89 to 93 (DSGGF), D143, Q187, and G214 contribute to the substrate site. The segment at 245–251 (GVGKPED) is RNA binding. The Nucleophile role is filled by D264. The RNA binding; important for wobble base 34 recognition stretch occupies residues 269–273 (TRNAR). C302, C304, C307, and H333 together coordinate Zn(2+).

The protein belongs to the queuine tRNA-ribosyltransferase family. In terms of assembly, homodimer. Within each dimer, one monomer is responsible for RNA recognition and catalysis, while the other monomer binds to the replacement base PreQ1. Zn(2+) is required as a cofactor.

It carries out the reaction 7-aminomethyl-7-carbaguanine + guanosine(34) in tRNA = 7-aminomethyl-7-carbaguanosine(34) in tRNA + guanine. It functions in the pathway tRNA modification; tRNA-queuosine biosynthesis. Its function is as follows. Catalyzes the base-exchange of a guanine (G) residue with the queuine precursor 7-aminomethyl-7-deazaguanine (PreQ1) at position 34 (anticodon wobble position) in tRNAs with GU(N) anticodons (tRNA-Asp, -Asn, -His and -Tyr). Catalysis occurs through a double-displacement mechanism. The nucleophile active site attacks the C1' of nucleotide 34 to detach the guanine base from the RNA, forming a covalent enzyme-RNA intermediate. The proton acceptor active site deprotonates the incoming PreQ1, allowing a nucleophilic attack on the C1' of the ribose to form the product. After dissociation, two additional enzymatic reactions on the tRNA convert PreQ1 to queuine (Q), resulting in the hypermodified nucleoside queuosine (7-(((4,5-cis-dihydroxy-2-cyclopenten-1-yl)amino)methyl)-7-deazaguanosine). The sequence is that of Queuine tRNA-ribosyltransferase from Pectobacterium atrosepticum (strain SCRI 1043 / ATCC BAA-672) (Erwinia carotovora subsp. atroseptica).